The sequence spans 183 residues: Ras-related protein Rap-2c (183 aa).

10–17 (GSGGVGKS) is a binding site for GTP. The Effector region motif lies at 32-40 (YDPTIEDFY). GTP contacts are provided by residues 57–61 (DTAGT) and 116–119 (NKVD). 2 S-palmitoyl cysteine lipidation sites follow: Cys176 and Cys177. The residue at position 180 (Cys180) is a Cysteine methyl ester. Residue Cys180 is the site of S-geranylgeranyl cysteine attachment. Positions 181–183 (VVQ) are cleaved as a propeptide — removed in mature form.

This sequence belongs to the small GTPase superfamily. Ras family. Post-translationally, palmitoylated. Palmitoylation is required for association with recycling endosome membranes and activation of TNIK.

It is found in the cytoplasm. Its subcellular location is the recycling endosome membrane. The catalysed reaction is GTP + H2O = GDP + phosphate + H(+). In terms of biological role, small GTP-binding protein which cycles between a GDP-bound inactive and a GTP-bound active form. May play a role in cytoskeletal rearrangements and regulate cell spreading through activation of the effector TNIK. May play a role in SRE-mediated gene transcription. The protein is Ras-related protein Rap-2c (RAP2C) of Bos taurus (Bovine).